The primary structure comprises 119 residues: DNA-binding protein inhibitor ID-3 (119 aa).

Positions 28–80 (RGKSPSAEEPLSLLDDMNHCYSRLRELVPGVPRGTQLSQVEILQRVIDYILDL) constitute a bHLH domain.

In terms of assembly, homodimer, and heterodimer with other HLH proteins. Interacts with COPS5 and COPS7A. Interacts with IFI204. Interacts with GATA4 and NKX2-5. Interacts with ANKRD2; both proteins cooperate in myoblast differentiation. Interacts with CLOCK and BMAL1. Phosphorylated in vitro by CDC2 and PKC.

The protein localises to the nucleus. In terms of biological role, transcriptional regulator (lacking a basic DNA binding domain) which negatively regulates the basic helix-loop-helix (bHLH) transcription factors by forming heterodimers and inhibiting their DNA binding and transcriptional activity. Implicated in regulating a variety of cellular processes, including cellular growth, senescence, differentiation, apoptosis, angiogenesis, and neoplastic transformation. Involved in myogenesis by inhibiting skeletal muscle and cardiac myocyte differentiation and promoting muscle precursor cells proliferation. Inhibits the binding of E2A-containing protein complexes to muscle creatine kinase E-box enhancer. Regulates the circadian clock by repressing the transcriptional activator activity of the CLOCK-BMAL1 heterodimer. The polypeptide is DNA-binding protein inhibitor ID-3 (Id3) (Rattus norvegicus (Rat)).